We begin with the raw amino-acid sequence, 1045 residues long: Translation initiation factor IF-2 (1045 aa).

2 disordered regions span residues 1–169 (MSDE…AQAP) and 184–451 (QAPA…RGGP). The span at 83–94 (SGGGGSSAGGLS) shows a compositional bias: gly residues. The span at 103–123 (RAIEAAREHQERQAAERRAAE) shows a compositional bias: basic and acidic residues. The segment covering 124-151 (ARAASEAAAARDAAAKSAAAAKAAAAPA) has biased composition (low complexity). Pro residues predominate over residues 152–163 (PEAPAAPAPTPA). A compositionally biased stretch (low complexity) spans 184–199 (QAPAAPVAAAPAAPRA). Basic and acidic residues-rich tracts occupy residues 227-237 (EPSRDRRDDRS) and 302-323 (RNDRPQGDRPQGDRPQGDRPQG). Over residues 338-348 (RPAPGARPGPG) the composition is skewed to pro residues. Low complexity predominate over residues 352 to 363 (GARPGVPASAPA). Composition is skewed to basic and acidic residues over residues 381–393 (VGRKPEEDDDRRK) and 438–450 (RAREREKEKRRGG). Positions 540–710 (PRPPVVTVMG…LLLAEVMDLK (171 aa)) constitute a tr-type G domain. Residues 549 to 556 (GHVDHGKT) form a G1 region. 549–556 (GHVDHGKT) contributes to the GTP binding site. A G2 region spans residues 574-578 (GITQH). The G3 stretch occupies residues 596–599 (DTPG). GTP is bound by residues 596–600 (DTPGH) and 650–653 (NKMD). The tract at residues 650–653 (NKMD) is G4. The tract at residues 686–688 (SAK) is G5.

It belongs to the TRAFAC class translation factor GTPase superfamily. Classic translation factor GTPase family. IF-2 subfamily.

It localises to the cytoplasm. Functionally, one of the essential components for the initiation of protein synthesis. Protects formylmethionyl-tRNA from spontaneous hydrolysis and promotes its binding to the 30S ribosomal subunits. Also involved in the hydrolysis of GTP during the formation of the 70S ribosomal complex. This is Translation initiation factor IF-2 from Caulobacter sp. (strain K31).